We begin with the raw amino-acid sequence, 84 residues long: Small ribosomal subunit protein uS17 (84 aa).

The protein belongs to the universal ribosomal protein uS17 family. Part of the 30S ribosomal subunit.

Its function is as follows. One of the primary rRNA binding proteins, it binds specifically to the 5'-end of 16S ribosomal RNA. This is Small ribosomal subunit protein uS17 from Shigella boydii serotype 18 (strain CDC 3083-94 / BS512).